Here is a 333-residue protein sequence, read N- to C-terminus: Homeobox protein Nkx-3.2 (333 aa).

Disordered stretches follow at residues 74–121 and 137–212; these read PART…RARV and DLEE…SRAA. Residues 137 to 148 are compositionally biased toward basic and acidic residues; that stretch reads DLEEEAPVRSDS. Over residues 179 to 191 the composition is skewed to gly residues; that stretch reads GAAGSGASGGQAG. Residues 206–265 constitute a DNA-binding region (homeobox); it reads KKRSRAAFSHAQVFELERRFNHQRYLSGPERADLAASLKLTETQVKIWFQNRRYKTKRRQ.

This sequence belongs to the NK-3 homeobox family. As to expression, expressed widely in mesoderm at the gastroduodenal junction (at protein level). Expressed in visceral mesoderm and embryonic skeleton. Expression is restricted to immature proliferative chondrocytes during endochondral ossification.

It is found in the nucleus. In terms of biological role, transcriptional repressor that acts as a negative regulator of chondrocyte maturation. PLays a role in distal stomach development; required for proper antral-pyloric morphogenesis and development of antral-type epithelium. In concert with GSC, defines the structural components of the middle ear; required for tympanic ring and gonium development and in the regulation of the width of the malleus. The sequence is that of Homeobox protein Nkx-3.2 (Nkx3-2) from Mus musculus (Mouse).